Consider the following 863-residue polypeptide: Ribosomal protein S6 kinase alpha-5 (863 aa).

A compositionally biased stretch (gly residues) spans 1–21 (MEGEGGGSGGAGTSGDSGDGG). The segment at 1-22 (MEGEGGGSGGAGTSGDSGDGGE) is disordered. Positions 48 to 317 (FELLKVLGTG…AEEIKEHLFF (270 aa)) constitute a Protein kinase 1 domain. ATP-binding positions include 54–62 (LGTGAYGKV) and Lys-80. The active-site Proton acceptor is the Asp-176. Position 211 is a phosphoserine; by autocatalysis (Ser-211). The region spanning 318 to 386 (EKIKWDDLAA…VAPSILFKRN (69 aa)) is the AGC-kinase C-terminal domain. Ser-359 is modified (phosphoserine; by MAPK1, MAPK3 and MAPK14). Phosphoserine; by autocatalysis occurs at positions 375 and 380. The region spanning 428 to 675 (DKPLGEGSFS…SCDLWSLGVI (248 aa)) is the Protein kinase 2 domain. Residues 431 to 440 (LGEGSFSICR) and Lys-454 contribute to the ATP site. The active-site Proton acceptor is the Asp-608. Residue Thr-645 is modified to Phosphothreonine; by MAPK1, MAPK3 and MAPK14. 4 positions are modified to phosphoserine: Ser-711, Ser-721, Ser-755, and Ser-759. Phosphothreonine is present on Thr-764. A disordered region spans residues 805–863 (AKRRKMKRTSTSTETRSSSSESSRSSSSQSHGKTTPTKTLQPSNPTEGSNPDTLFQFSD). Positions 813–832 (TSTSTETRSSSSESSRSSSS) are enriched in low complexity. Phosphoserine; by autocatalysis occurs at positions 814, 816, and 822. A compositionally biased stretch (polar residues) spans 833–863 (QSHGKTTPTKTLQPSNPTEGSNPDTLFQFSD). Ser-862 carries the phosphoserine modification.

This sequence belongs to the protein kinase superfamily. AGC Ser/Thr protein kinase family. S6 kinase subfamily. In terms of assembly, forms a complex with either MAPK1/ERK2 or MAPK3/ERK1 in quiescent cells which transiently dissociates following mitogenic stimulation. Also associates with MAPK14/p38-alpha. Activated RPS6KA5 associates with and phosphorylates the NF-kappa-B p65 subunit RELA. Interacts with CREBBP and EP300. It depends on Mg(2+) as a cofactor. Ser-375 and Thr-645 phosphorylation is required for kinase activity. Ser-375 and Ser-211 are autophosphorylated by the C-terminal kinase domain, and their phosphorylation is essential for the catalytic activity of the N-terminal kinase domain. Phosphorylated at Ser-359, Thr-645 and Thr-764 by MAPK1/ERK2, MAPK3/ERK1 and MAPK14/p38-alpha. Autophosphorylated at Ser-814, Ser-816 and Ser-822 by the N-terminal kinase domain. Post-translationally, ubiquitinated.

The protein resides in the nucleus. The enzyme catalyses L-seryl-[protein] + ATP = O-phospho-L-seryl-[protein] + ADP + H(+). The catalysed reaction is L-threonyl-[protein] + ATP = O-phospho-L-threonyl-[protein] + ADP + H(+). Activated by phosphorylation at Ser-359, Thr-645 and Thr-764 by MAPK1/ERK2, MAPK3/ERK1 and MAPK14/p38-alpha, and by further autophosphorylation of Ser-211, Ser-375 and Ser-380 by the activated C-terminal kinase domain. The active N-terminal kinase domain finally phosphorylates downstream substrates, as well as Ser-814, Ser-816 and Ser-822 in its own C-terminal region. Serine/threonine-protein kinase that is required for the mitogen or stress-induced phosphorylation of the transcription factors CREB1 and ATF1 and for the regulation of the transcription factors RELA, STAT3 and ETV1/ER81, and that contributes to gene activation by histone phosphorylation and functions in the regulation of inflammatory genes. Phosphorylates CREB1 and ATF1 in response to mitogenic or stress stimuli such as UV-C irradiation, epidermal growth factor (EGF) and anisomycin. Plays an essential role in the control of RELA transcriptional activity in response to TNF and upon glucocorticoid, associates in the cytoplasm with the glucocorticoid receptor NR3C1 and contributes to RELA inhibition and repression of inflammatory gene expression. In skeletal myoblasts is required for phosphorylation of RELA at 'Ser-276' during oxidative stress. In erythropoietin-stimulated cells, is necessary for the 'Ser-727' phosphorylation of STAT3 and regulation of its transcriptional potential. Phosphorylates ETV1/ER81 at 'Ser-191' and 'Ser-216', and thereby regulates its ability to stimulate transcription, which may be important during development and breast tumor formation. Directly represses transcription via phosphorylation of 'Ser-1' of histone H2A. Phosphorylates 'Ser-10' of histone H3 in response to mitogenics, stress stimuli and EGF, which results in the transcriptional activation of several immediate early genes, including proto-oncogenes c-fos/FOS and c-jun/JUN. May also phosphorylate 'Ser-28' of histone H3. Mediates the mitogen- and stress-induced phosphorylation of high mobility group protein 1 (HMGN1/HMG14). In lipopolysaccharide-stimulated primary macrophages, acts downstream of the Toll-like receptor TLR4 to limit the production of pro-inflammatory cytokines. Functions probably by inducing transcription of the MAP kinase phosphatase DUSP1 and the anti-inflammatory cytokine interleukin 10 (IL10), via CREB1 and ATF1 transcription factors. Plays a role in neuronal cell death by mediating the downstream effects of excitotoxic injury. Phosphorylates TRIM7 at 'Ser-106' in response to growth factor signaling via the MEK/ERK pathway, thereby stimulating its ubiquitin ligase activity. The polypeptide is Ribosomal protein S6 kinase alpha-5 (Rps6ka5) (Mus musculus (Mouse)).